The chain runs to 480 residues: NADH-quinone oxidoreductase subunit N (480 aa).

Helical transmembrane passes span 12–32 (LLIP…LGVF), 41–61 (LVQW…LFLV), 80–100 (FSKT…MPYL), 105–125 (LGKI…MMMV), 130–150 (LIAM…LAAF), 165–185 (FVLG…VYGF), 204–224 (IGLT…VSAA), 237–257 (APTP…IVLL), 275–295 (VIWM…LTQQ), 300–320 (LMAY…AAAS), 326–346 (ALLV…ATIL), 372–392 (GWSM…VGFF), 406–428 (LMIL…LRIV), and 450–470 (IARI…WLVF).

The protein belongs to the complex I subunit 2 family. NDH-1 is composed of 14 different subunits. Subunits NuoA, H, J, K, L, M, N constitute the membrane sector of the complex.

The protein localises to the cell inner membrane. It carries out the reaction a quinone + NADH + 5 H(+)(in) = a quinol + NAD(+) + 4 H(+)(out). NDH-1 shuttles electrons from NADH, via FMN and iron-sulfur (Fe-S) centers, to quinones in the respiratory chain. The immediate electron acceptor for the enzyme in this species is believed to be ubiquinone. Couples the redox reaction to proton translocation (for every two electrons transferred, four hydrogen ions are translocated across the cytoplasmic membrane), and thus conserves the redox energy in a proton gradient. The sequence is that of NADH-quinone oxidoreductase subunit N from Maricaulis maris (strain MCS10) (Caulobacter maris).